The following is a 351-amino-acid chain: Hydroxymethylglutaryl-CoA synthase (351 aa).

Glu80 acts as the Proton donor/acceptor in catalysis. Residue Cys112 is the Acyl-thioester intermediate of the active site. Cys112 and Ser153 together coordinate (3S)-3-hydroxy-3-methylglutaryl-CoA. Position 199 (Arg199) interacts with CoA. Thr201 and His234 together coordinate (3S)-3-hydroxy-3-methylglutaryl-CoA. The active-site Proton donor/acceptor is the His234. Lys239 contributes to the CoA binding site. (3S)-3-hydroxy-3-methylglutaryl-CoA is bound by residues Arg243, Asn266, and Ser296.

The protein belongs to the thiolase-like superfamily. Archaeal HMG-CoA synthase family. In terms of assembly, interacts with acetoacetyl-CoA thiolase that catalyzes the precedent step in the pathway and with a DUF35 protein. The acetoacetyl-CoA thiolase/HMG-CoA synthase complex channels the intermediate via a fused CoA-binding site, which allows for efficient coupling of the endergonic thiolase reaction with the exergonic HMGCS reaction.

The catalysed reaction is acetoacetyl-CoA + acetyl-CoA + H2O = (3S)-3-hydroxy-3-methylglutaryl-CoA + CoA + H(+). The protein operates within metabolic intermediate biosynthesis; (R)-mevalonate biosynthesis; (R)-mevalonate from acetyl-CoA: step 2/3. Its function is as follows. Catalyzes the condensation of acetyl-CoA with acetoacetyl-CoA to form 3-hydroxy-3-methylglutaryl-CoA (HMG-CoA). Functions in the mevalonate (MVA) pathway leading to isopentenyl diphosphate (IPP), a key precursor for the biosynthesis of isoprenoid compounds that are building blocks of archaeal membrane lipids. The polypeptide is Hydroxymethylglutaryl-CoA synthase (Thermoplasma volcanium (strain ATCC 51530 / DSM 4299 / JCM 9571 / NBRC 15438 / GSS1)).